We begin with the raw amino-acid sequence, 86 residues long: Neurotoxin LmNaTx1 (86 aa).

An N-terminal signal peptide occupies residues 1 to 18 (MKILIIFVIAITVVGVQS). Residues 19–85 (KDGYPIYSTG…VWTYAENTCG (67 aa)) form the LCN-type CS-alpha/beta domain. 4 cysteine pairs are disulfide-bonded: C33-C84, C37-C58, C44-C65, and C48-C67. A Cysteine amide modification is found at C84.

It belongs to the long (4 C-C) scorpion toxin superfamily. Sodium channel inhibitor family. Beta subfamily. Expressed by the venom gland.

It is found in the secreted. In terms of biological role, binds voltage-independently at site-4 of sodium channels (Nav) and shift the voltage of activation toward more negative potentials thereby affecting sodium channel activation and promoting spontaneous and repetitive firing. In Lychas mucronatus (Chinese swimming scorpion), this protein is Neurotoxin LmNaTx1.